The chain runs to 508 residues: Maturase K (508 aa).

The protein belongs to the intron maturase 2 family. MatK subfamily.

Its subcellular location is the plastid. It localises to the chloroplast. Its function is as follows. Usually encoded in the trnK tRNA gene intron. Probably assists in splicing its own and other chloroplast group II introns. The protein is Maturase K of Chaetosphaeridium globosum (Charophycean green alga).